Consider the following 500-residue polypeptide: NAD(P)H-quinone oxidoreductase chain 4, chloroplastic (500 aa).

Helical transmembrane passes span 4-24 (FPWL…MLFL), 35-55 (YTIC…CYNF), 87-107 (IGTI…AFPV), 113-130 (LFHF…GSFS), 134-154 (LLLF…LLSM), 167-187 (FILY…GISL), 211-231 (IILY…IPLH), 242-262 (HYST…YGLV), 272-292 (AHSL…IYAA), 305-325 (IAYS…SITD), 330-350 (GAIL…FLAG), 386-406 (LALP…GIIT), 416-436 (IFII…LLSM), and 462-482 (LFLS…PDFV).

Belongs to the complex I subunit 4 family.

Its subcellular location is the plastid. The protein localises to the chloroplast thylakoid membrane. It catalyses the reaction a plastoquinone + NADH + (n+1) H(+)(in) = a plastoquinol + NAD(+) + n H(+)(out). It carries out the reaction a plastoquinone + NADPH + (n+1) H(+)(in) = a plastoquinol + NADP(+) + n H(+)(out). The chain is NAD(P)H-quinone oxidoreductase chain 4, chloroplastic from Aethionema cordifolium (Lebanon stonecress).